Reading from the N-terminus, the 397-residue chain is Phosphoglycerate kinase (397 aa).

Residues 26–28, arginine 42, 65–68, arginine 119, and arginine 152 contribute to the substrate site; these read DLN and HLGR. ATP is bound by residues lysine 203, glutamate 325, and 351-354; that span reads GGDT.

This sequence belongs to the phosphoglycerate kinase family. As to quaternary structure, monomer.

The protein resides in the cytoplasm. The enzyme catalyses (2R)-3-phosphoglycerate + ATP = (2R)-3-phospho-glyceroyl phosphate + ADP. It participates in carbohydrate degradation; glycolysis; pyruvate from D-glyceraldehyde 3-phosphate: step 2/5. In Bordetella pertussis (strain Tohama I / ATCC BAA-589 / NCTC 13251), this protein is Phosphoglycerate kinase.